We begin with the raw amino-acid sequence, 92 residues long: Small ribosomal subunit protein bS18 (92 aa).

Belongs to the bacterial ribosomal protein bS18 family. As to quaternary structure, part of the 30S ribosomal subunit. Forms a tight heterodimer with protein bS6.

Its function is as follows. Binds as a heterodimer with protein bS6 to the central domain of the 16S rRNA, where it helps stabilize the platform of the 30S subunit. The sequence is that of Small ribosomal subunit protein bS18 from Ralstonia nicotianae (strain ATCC BAA-1114 / GMI1000) (Ralstonia solanacearum).